A 189-amino-acid chain; its full sequence is Elongation factor P (189 aa).

It belongs to the elongation factor P family.

It localises to the cytoplasm. The protein operates within protein biosynthesis; polypeptide chain elongation. Functionally, involved in peptide bond synthesis. Stimulates efficient translation and peptide-bond synthesis on native or reconstituted 70S ribosomes in vitro. Probably functions indirectly by altering the affinity of the ribosome for aminoacyl-tRNA, thus increasing their reactivity as acceptors for peptidyl transferase. The protein is Elongation factor P of Pseudomonas syringae pv. tomato (strain ATCC BAA-871 / DC3000).